The following is a 133-amino-acid chain: uncharacterized protein (133 aa).

The first 23 residues, Met1 to Thr23, serve as a signal peptide directing secretion. The segment at Glu82 to Lys133 is disordered. A compositionally biased stretch (low complexity) spans Gln96–Pro118.

The protein localises to the secreted. This is an uncharacterized protein from Dictyostelium discoideum (Social amoeba).